The following is a 411-amino-acid chain: Multifunctional CCA protein (411 aa).

Residues Gly-8 and Arg-11 each coordinate ATP. Gly-8 and Arg-11 together coordinate CTP. Mg(2+)-binding residues include Asp-21 and Asp-23. 3 residues coordinate ATP: Arg-91, Arg-143, and Arg-146. Positions 91, 143, and 146 each coordinate CTP. Residues 232–333 (TGVHVMMVID…MRLLERCDAL (102 aa)) enclose the HD domain.

Belongs to the tRNA nucleotidyltransferase/poly(A) polymerase family. Bacterial CCA-adding enzyme type 1 subfamily. As to quaternary structure, monomer. Can also form homodimers and oligomers. It depends on Mg(2+) as a cofactor. Ni(2+) is required as a cofactor.

It catalyses the reaction a tRNA precursor + 2 CTP + ATP = a tRNA with a 3' CCA end + 3 diphosphate. It carries out the reaction a tRNA with a 3' CCA end + 2 CTP + ATP = a tRNA with a 3' CCACCA end + 3 diphosphate. In terms of biological role, catalyzes the addition and repair of the essential 3'-terminal CCA sequence in tRNAs without using a nucleic acid template. Adds these three nucleotides in the order of C, C, and A to the tRNA nucleotide-73, using CTP and ATP as substrates and producing inorganic pyrophosphate. tRNA 3'-terminal CCA addition is required both for tRNA processing and repair. Also involved in tRNA surveillance by mediating tandem CCA addition to generate a CCACCA at the 3' terminus of unstable tRNAs. While stable tRNAs receive only 3'-terminal CCA, unstable tRNAs are marked with CCACCA and rapidly degraded. The polypeptide is Multifunctional CCA protein (Cupriavidus necator (strain ATCC 17699 / DSM 428 / KCTC 22496 / NCIMB 10442 / H16 / Stanier 337) (Ralstonia eutropha)).